The sequence spans 533 residues: Tyrosine decarboxylase (533 aa).

Positions 1 to 22 (MAPPSHCHTINGGAPRNGAIPE) are disordered. The pyridoxal 5'-phosphate site is built by T281 and N336. N6-(pyridoxal phosphate)lysine is present on K339.

This sequence belongs to the group II decarboxylase family. The cofactor is pyridoxal 5'-phosphate.

It catalyses the reaction L-tyrosine + H(+) = tyramine + CO2. In terms of biological role, catalyzes the decarboxylation of L-tyrosine to tyramine, which can be converted to the hydroxycinnamic acid amides feruloyltyramine and 4-coumaroyltyramine. Possesses low tryptophan decarboxylase activity. The polypeptide is Tyrosine decarboxylase (Oryza sativa subsp. japonica (Rice)).